The sequence spans 296 residues: Glycine--tRNA ligase alpha subunit (296 aa).

It belongs to the class-II aminoacyl-tRNA synthetase family. As to quaternary structure, tetramer of two alpha and two beta subunits.

It is found in the cytoplasm. The enzyme catalyses tRNA(Gly) + glycine + ATP = glycyl-tRNA(Gly) + AMP + diphosphate. This chain is Glycine--tRNA ligase alpha subunit, found in Listeria welshimeri serovar 6b (strain ATCC 35897 / DSM 20650 / CCUG 15529 / CIP 8149 / NCTC 11857 / SLCC 5334 / V8).